We begin with the raw amino-acid sequence, 245 residues long: Biosynthetic peptidoglycan transglycosylase (245 aa).

Residues 20-42 (VYAGSVFAGAWLATQLFYLAQIA) form a helical membrane-spanning segment.

The protein belongs to the glycosyltransferase 51 family.

It localises to the cell inner membrane. It carries out the reaction [GlcNAc-(1-&gt;4)-Mur2Ac(oyl-L-Ala-gamma-D-Glu-L-Lys-D-Ala-D-Ala)](n)-di-trans,octa-cis-undecaprenyl diphosphate + beta-D-GlcNAc-(1-&gt;4)-Mur2Ac(oyl-L-Ala-gamma-D-Glu-L-Lys-D-Ala-D-Ala)-di-trans,octa-cis-undecaprenyl diphosphate = [GlcNAc-(1-&gt;4)-Mur2Ac(oyl-L-Ala-gamma-D-Glu-L-Lys-D-Ala-D-Ala)](n+1)-di-trans,octa-cis-undecaprenyl diphosphate + di-trans,octa-cis-undecaprenyl diphosphate + H(+). Its pathway is cell wall biogenesis; peptidoglycan biosynthesis. Its function is as follows. Peptidoglycan polymerase that catalyzes glycan chain elongation from lipid-linked precursors. The chain is Biosynthetic peptidoglycan transglycosylase from Burkholderia orbicola (strain MC0-3).